The following is a 579-amino-acid chain: Arginine--tRNA ligase (579 aa).

The short motif at 127–137 is the 'HIGH' region element; the sequence is PNLAKEMHVGH.

It belongs to the class-I aminoacyl-tRNA synthetase family. In terms of assembly, monomer.

Its subcellular location is the cytoplasm. It carries out the reaction tRNA(Arg) + L-arginine + ATP = L-arginyl-tRNA(Arg) + AMP + diphosphate. The sequence is that of Arginine--tRNA ligase from Azotobacter vinelandii (strain DJ / ATCC BAA-1303).